The sequence spans 431 residues: Glutamate-1-semialdehyde 2,1-aminomutase (431 aa).

An N6-(pyridoxal phosphate)lysine modification is found at Lys-269.

The protein belongs to the class-III pyridoxal-phosphate-dependent aminotransferase family. HemL subfamily. In terms of assembly, homodimer. Pyridoxal 5'-phosphate is required as a cofactor.

Its subcellular location is the cytoplasm. It catalyses the reaction (S)-4-amino-5-oxopentanoate = 5-aminolevulinate. It functions in the pathway porphyrin-containing compound metabolism; protoporphyrin-IX biosynthesis; 5-aminolevulinate from L-glutamyl-tRNA(Glu): step 2/2. The chain is Glutamate-1-semialdehyde 2,1-aminomutase from Francisella tularensis subsp. holarctica (strain LVS).